The chain runs to 428 residues: Adenylosuccinate synthetase (428 aa).

Residues 12–18 and 40–42 contribute to the GTP site; these read GDEGKGK and GHT. Catalysis depends on aspartate 13, which acts as the Proton acceptor. The Mg(2+) site is built by aspartate 13 and glycine 40. Residues 13–16, 38–41, threonine 128, arginine 142, glutamine 223, threonine 238, and arginine 302 contribute to the IMP site; these read DEGK and NAGH. Histidine 41 serves as the catalytic Proton donor. 298 to 304 provides a ligand contact to substrate; sequence VTTGRPR. GTP contacts are provided by residues arginine 304, 330 to 332, and 412 to 414; these read KLD and GTG.

It belongs to the adenylosuccinate synthetase family. Homodimer. The cofactor is Mg(2+).

It localises to the cytoplasm. The enzyme catalyses IMP + L-aspartate + GTP = N(6)-(1,2-dicarboxyethyl)-AMP + GDP + phosphate + 2 H(+). It participates in purine metabolism; AMP biosynthesis via de novo pathway; AMP from IMP: step 1/2. Plays an important role in the de novo pathway of purine nucleotide biosynthesis. Catalyzes the first committed step in the biosynthesis of AMP from IMP. The protein is Adenylosuccinate synthetase of Bifidobacterium adolescentis (strain ATCC 15703 / DSM 20083 / NCTC 11814 / E194a).